The primary structure comprises 84 residues: Delta-conotoxin-like Bt6.4 (84 aa).

A signal peptide spans 1-22 (MKLTCMVIVAVLFLTAWTSVMA). Positions 23-57 (DGSINRPDIAEGWQKFFSKARDEMKNRAASELNKR) are excised as a propeptide. 3 disulfide bridges follow: C58/C74, C65/C78, and C73/C82.

Belongs to the conotoxin O1 superfamily. Expressed by the venom duct.

The protein localises to the secreted. Functionally, this toxin activates voltage-gated sodium channels. It shifts the voltage-dependence of activation to more hyperpolarized potentials but has only little effect on channel inactivation. It is active on Nav1.3/SCN3A (EC(50)=3.98 nM), Nav1.4/SCN4A (EC(50)=4.99 nM), Nav1.6/SCN8A (EC(50)=1.27 nM) and Nav1.7/SCN9A (EC(50)=2.42 nM) voltage-gated sodium channels. In vivo, it induces nocifensive or pain-like behaviors in mice when injected intraplantarly. This is Delta-conotoxin-like Bt6.4 from Conus betulinus (Beech cone).